The following is a 1469-amino-acid chain: Protein BCL9 homolog (1469 aa).

Positions 1–16 (MLSTTMPRSPTQQQPQ) are enriched in polar residues. Disordered stretches follow at residues 1 to 131 (MLST…NVSA), 161 to 187 (SNKAKGQAAGGGCETGSTSSLTVKEEP), 200 to 222 (EERENHSPTMSPVGFGSIGNAQD), 422 to 442 (ENSKRSTVSAPSNSFVDQSDP), and 454 to 474 (GGSSNTSRSGQNSRNHVDSIS). At Ser-9 the chain carries Phosphoserine. Thr-11 is subject to Phosphothreonine. The span at 17 to 34 (PNSDASSTSASGSNPGAA) shows a compositional bias: low complexity. Polar residues-rich tracts occupy residues 40–60 (SAASRSSPKTLNSEPFSTLSP) and 90–113 (SGNNLPEGQTMLRQNSTSTINSCL). Low complexity predominate over residues 116-130 (SPQNSSEHSNSSNVS). Ser-206 bears the Phosphoserine mark. At Thr-208 the chain carries Phosphothreonine. Ser-210 is subject to Phosphoserine. Composition is skewed to polar residues over residues 422 to 438 (ENSKRSTVSAPSNSFVD) and 455 to 474 (GSSNTSRSGQNSRNHVDSIS). The tract at residues 511-555 (SLQGVKVPDENLTPQQRQHREEQLAKIKKMNQFLFPENENSVGAN) is ARM-binding. Disordered stretches follow at residues 728 to 830 (GGKP…TSTV), 844 to 913 (CFQA…RSPV), and 961 to 991 (QASAQGGSVQFSRRSDNIPLNPNSGNRPPPN). Low complexity predominate over residues 731–745 (PRQVTGTVVPQQQTP). The span at 770–781 (IQRSASVPIATQ) shows a compositional bias: polar residues. Over residues 782-796 (SPNPSSPNNLSLPSP) the composition is skewed to low complexity. 2 stretches are compositionally biased toward polar residues: residues 806–830 (PTNSPSMDGTGSLSGSVPQANTSTV) and 844–880 (CFQADTPSPSNQNRSRNTGSSSVLTHNLSSNPSTPLS). A phosphoserine mark is found at Ser-883, Ser-905, and Ser-911. Residues 904–913 (PSPQGQRSPV) show a composition bias toward polar residues.

The protein belongs to the BCL9 family. In terms of assembly, binds to ARM and PYGO.

Its subcellular location is the nucleus. Involved in signal transduction through the Wnt pathway. The polypeptide is Protein BCL9 homolog (lgs) (Drosophila melanogaster (Fruit fly)).